A 195-amino-acid polypeptide reads, in one-letter code: Imidazoleglycerol-phosphate dehydratase (195 aa).

It belongs to the imidazoleglycerol-phosphate dehydratase family.

Its subcellular location is the cytoplasm. It carries out the reaction D-erythro-1-(imidazol-4-yl)glycerol 3-phosphate = 3-(imidazol-4-yl)-2-oxopropyl phosphate + H2O. The protein operates within amino-acid biosynthesis; L-histidine biosynthesis; L-histidine from 5-phospho-alpha-D-ribose 1-diphosphate: step 6/9. The polypeptide is Imidazoleglycerol-phosphate dehydratase (Pelotomaculum thermopropionicum (strain DSM 13744 / JCM 10971 / SI)).